Here is a 168-residue protein sequence, read N- to C-terminus: uncharacterized protein (168 aa).

4 helical membrane passes run 1–21 (MFWL…AVAR), 41–61 (PYII…VLLM), 68–88 (WWLG…WALC), and 123–143 (VILE…MCLF).

The protein localises to the cell membrane. This is an uncharacterized protein from Bacillus subtilis (strain 168).